The following is a 211-amino-acid chain: Uridine kinase (211 aa).

12–19 (GGSGSGKT) is an ATP binding site.

This sequence belongs to the uridine kinase family.

The protein localises to the cytoplasm. The catalysed reaction is uridine + ATP = UMP + ADP + H(+). The enzyme catalyses cytidine + ATP = CMP + ADP + H(+). It participates in pyrimidine metabolism; CTP biosynthesis via salvage pathway; CTP from cytidine: step 1/3. It functions in the pathway pyrimidine metabolism; UMP biosynthesis via salvage pathway; UMP from uridine: step 1/1. The chain is Uridine kinase from Geobacillus sp. (strain WCH70).